Reading from the N-terminus, the 202-residue chain is ATP-dependent Clp protease proteolytic subunit (202 aa).

Serine 106 functions as the Nucleophile in the catalytic mechanism. Histidine 131 is an active-site residue.

The protein belongs to the peptidase S14 family. As to quaternary structure, fourteen ClpP subunits assemble into 2 heptameric rings which stack back to back to give a disk-like structure with a central cavity, resembling the structure of eukaryotic proteasomes.

It is found in the cytoplasm. It catalyses the reaction Hydrolysis of proteins to small peptides in the presence of ATP and magnesium. alpha-casein is the usual test substrate. In the absence of ATP, only oligopeptides shorter than five residues are hydrolyzed (such as succinyl-Leu-Tyr-|-NHMec, and Leu-Tyr-Leu-|-Tyr-Trp, in which cleavage of the -Tyr-|-Leu- and -Tyr-|-Trp bonds also occurs).. Cleaves peptides in various proteins in a process that requires ATP hydrolysis. Has a chymotrypsin-like activity. Plays a major role in the degradation of misfolded proteins. This Verminephrobacter eiseniae (strain EF01-2) protein is ATP-dependent Clp protease proteolytic subunit.